We begin with the raw amino-acid sequence, 187 residues long: Auxin-binding protein T92 (187 aa).

The N-terminal stretch at 1 to 20 (MARHIIILVAVFWFATAEAS) is a signal peptide. A disulfide bridge connects residues C22 and C177. Zn(2+)-binding residues include H78, H80, and E84. N-linked (GlcNAc...) asparagine glycosylation is present at N117. H128 contacts Zn(2+). Residues 184-187 (KDEL) carry the Prevents secretion from ER motif.

In terms of assembly, homodimer.

It is found in the endoplasmic reticulum lumen. Its function is as follows. This is probably a receptor for the plant hormone auxin. This Nicotiana tabacum (Common tobacco) protein is Auxin-binding protein T92 (T92).